The primary structure comprises 426 residues: 3-phosphoshikimate 1-carboxyvinyltransferase (426 aa).

3 residues coordinate 3-phosphoshikimate: lysine 21, serine 22, and arginine 26. Position 21 (lysine 21) interacts with phosphoenolpyruvate. Phosphoenolpyruvate is bound by residues glycine 91 and arginine 119. 3-phosphoshikimate contacts are provided by serine 162, serine 163, glutamine 164, serine 190, aspartate 304, and lysine 331. Glutamine 164 provides a ligand contact to phosphoenolpyruvate. Catalysis depends on aspartate 304, which acts as the Proton acceptor. Residues arginine 335, arginine 377, and lysine 403 each coordinate phosphoenolpyruvate.

The protein belongs to the EPSP synthase family. Monomer.

It is found in the cytoplasm. The catalysed reaction is 3-phosphoshikimate + phosphoenolpyruvate = 5-O-(1-carboxyvinyl)-3-phosphoshikimate + phosphate. Its pathway is metabolic intermediate biosynthesis; chorismate biosynthesis; chorismate from D-erythrose 4-phosphate and phosphoenolpyruvate: step 6/7. Catalyzes the transfer of the enolpyruvyl moiety of phosphoenolpyruvate (PEP) to the 5-hydroxyl of shikimate-3-phosphate (S3P) to produce enolpyruvyl shikimate-3-phosphate and inorganic phosphate. This Clostridium kluyveri (strain ATCC 8527 / DSM 555 / NBRC 12016 / NCIMB 10680 / K1) protein is 3-phosphoshikimate 1-carboxyvinyltransferase.